The sequence spans 1334 residues: Nck-associated protein 5-like (1334 aa).

Disordered stretches follow at residues M1–G28, L115–P146, T210–Q234, G266–T316, and P349–S711. Residues M1 to E139 are mediates interaction with CDK5RAP2 and is required for homodimerization and microtubule bundle formation. Residues G28–Q106 are a coiled coil. Residues P122–S132 show a composition bias toward pro residues. Polar residues predominate over residues G358–K372. A phosphoserine; by CDK1 mark is found at S440, S451, S470, and S477. Low complexity predominate over residues S468–P481. Residues S484–P487 carry the (S/T)X(I/L)P motif 1 motif. A phosphoserine mark is found at S493, S496, and S498. The span at L519–S547 shows a compositional bias: polar residues. Phosphoserine; by CDK1 occurs at positions 571 and 577. Polar residues predominate over residues P638–S649. The residue at position 659 (T659) is a Phosphothreonine. The interval R750–K1146 is mediates interaction with beta-tubulin and is required for microtubule bundle formation. A Phosphoserine; by CDK1 modification is found at S767. Residues L782 to E884 form a disordered region. Positions S810–K825 are enriched in low complexity. The short motif at T816–P819 is the (S/T)X(I/L)P motif 2 element. The short motif at S926 to P929 is the (S/T)X(I/L)P motif 3; required for interaction with MAPRE1 element. 3 disordered regions span residues L931 to E953, K986 to L1015, and L1030 to I1183. A compositionally biased stretch (basic and acidic residues) spans R933 to E942. Positions M956–R994 form a coiled coil. Basic and acidic residues predominate over residues V1033–Y1050. Over residues G1079–E1090 the composition is skewed to low complexity. A compositionally biased stretch (polar residues) spans S1110–L1122. Over residues L1152–T1167 the composition is skewed to pro residues. S1194 carries the phosphoserine modification. Residues A1197 to P1206 show a composition bias toward low complexity. The disordered stretch occupies residues A1197–G1334. Residues T1235 to D1247 are compositionally biased toward polar residues. The span at L1313–G1334 shows a compositional bias: low complexity.

As to quaternary structure, homodimer. Interacts with CDK5RAP2. Interacts with MAPRE1. Interacts with beta-tubulin. CDK1/Cyclin B-dependent phosphorylation mediates its dissociation from centrosomes during mitosis.

It is found in the cytoplasm. The protein resides in the cytoskeleton. Its subcellular location is the microtubule organizing center. It localises to the centrosome. Functionally, regulates microtubule organization and stabilization. Promotes microtubule growth and bundling formation and stabilizes microtubules by increasing intense acetylation of microtubules. Both tubulin-binding and homodimer formation are required for NCKAP5L-mediated microtubule bundle formation. The chain is Nck-associated protein 5-like from Homo sapiens (Human).